We begin with the raw amino-acid sequence, 149 residues long: Ribosome maturation factor RimP (149 aa).

This sequence belongs to the RimP family.

The protein localises to the cytoplasm. In terms of biological role, required for maturation of 30S ribosomal subunits. In Clostridium acetobutylicum (strain ATCC 824 / DSM 792 / JCM 1419 / IAM 19013 / LMG 5710 / NBRC 13948 / NRRL B-527 / VKM B-1787 / 2291 / W), this protein is Ribosome maturation factor RimP.